A 142-amino-acid chain; its full sequence is HTH-type transcriptional repressor NsrR (142 aa).

Residues 2-129 enclose the HTH rrf2-type domain; the sequence is QLTSFTDYGL…DRHTLAELVE (128 aa). The segment at residues 28-51 is a DNA-binding region (H-T-H motif); it reads ITEVTQVYGVSRNHMVKIINQLSH. Cys-91, Cys-96, and Cys-102 together coordinate [2Fe-2S] cluster.

Requires [2Fe-2S] cluster as cofactor.

Functionally, nitric oxide-sensitive repressor of genes involved in protecting the cell against nitrosative stress. May require iron for activity. This chain is HTH-type transcriptional repressor NsrR, found in Proteus mirabilis (strain HI4320).